The primary structure comprises 27 residues: Conotoxin as14a (27 aa).

Disulfide bonds link Cys6-Cys26 and Cys10-Cys22.

This sequence belongs to the conotoxin L superfamily. Expressed by the venom duct.

The protein resides in the secreted. Its function is as follows. In vivo, intracranial injection, elicits scratching and grooming activity in mice. This chain is Conotoxin as14a, found in Conus cancellatus (Cancellate cone).